We begin with the raw amino-acid sequence, 631 residues long: MALPGSSTVFLLALTIIASTQALTPTHYLTKHDVERLKASLDRPFTSLESAFYSIVGLSSLGAQVPDVKKACTFIKSNLDPSNVDSLFYAAQSSQALSGCEISISNETKDLLLAAVSEDSSVAQIYHAVAALSGFGLPLASQEALGALTARLSKEETVLATVQALQTASYLSQQADLRSIVEEIEDLVARLDELGGVYLQFEEGLETTALFVAATYKLMDHVGTEPSIKEDQVIQLMNAIFSKKNFESLSEAFSVASAAAALSENRYHVPVVVVPEGSPSYTQEQAILRLQVTNVLSQPLTQATVKLEHAKSVASRATVLQKTSFTLIGDVFELNFMNVKFSSGYYDFSVKVEGDNRYIANTVELRVKISTEVGITNVDLSTVDKDQSIAPKTTRVTYPAKAKGTFIADSHQNFALFFQLVDVNTGAELTPHQTFVRLHNQKTGQEVVFVAEPDSKNVYKFELDTSERKLEFDSASGTYTLYLIIGDATLKNPILWNVADVVIRFPEDDVPSTVLSKNIFTPKQEIQHLFREPEKRPPTVVSNTFTALILSPLLLLFALWIRIGANVSNFTFAPSTIVFHLGHAAMLGLMYVYWTQLNMFQTLKYLAILGSVTFLAGNRMLAQQAIKRTAH.

The first 22 residues, 1–22, serve as a signal peptide directing secretion; the sequence is MALPGSSTVFLLALTIIASTQA. The Lumenal segment spans residues 23–540; the sequence is LTPTHYLTKH…REPEKRPPTV (518 aa). N106 carries N-linked (GlcNAc...) asparagine glycosylation. K154 is covalently cross-linked (Glycyl lysine isopeptide (Lys-Gly) (interchain with G-Cter in ubiquitin)). Residues 541-561 traverse the membrane as a helical segment; that stretch reads VSNTFTALILSPLLLLFALWI. Over 562 to 571 the chain is Cytoplasmic; sequence RIGANVSNFT. The helical transmembrane segment at 572–592 threads the bilayer; the sequence is FAPSTIVFHLGHAAMLGLMYV. Over 593–596 the chain is Lumenal; that stretch reads YWTQ. The chain crosses the membrane as a helical span at residues 597-617; sequence LNMFQTLKYLAILGSVTFLAG. Topologically, residues 618 to 631 are cytoplasmic; the sequence is NRMLAQQAIKRTAH.

The protein belongs to the SWP1 family. As to quaternary structure, component of the oligosaccharyltransferase (OST) complex. OST exists in two different complex forms which contain common core subunits RPN1, RPN2, OST48, OST4, DAD1 and TMEM258, either STT3A or STT3B as catalytic subunits, and form-specific accessory subunits. STT3A complex assembly occurs through the formation of 3 subcomplexes. Subcomplex 1 contains RPN1 and TMEM258, subcomplex 2 contains the STT3A-specific subunits STT3A, DC2/OSTC, and KCP2 as well as the core subunit OST4, and subcomplex 3 contains RPN2, DAD1, and OST48. The STT3A complex can form stable complexes with the Sec61 complex or with both the Sec61 and TRAP complexes. Interacts with DDI2. Interacts with TMEM35A/NACHO.

It localises to the endoplasmic reticulum. The protein localises to the endoplasmic reticulum membrane. It participates in protein modification; protein glycosylation. Functionally, subunit of the oligosaccharyl transferase (OST) complex that catalyzes the initial transfer of a defined glycan (Glc(3)Man(9)GlcNAc(2) in eukaryotes) from the lipid carrier dolichol-pyrophosphate to an asparagine residue within an Asn-X-Ser/Thr consensus motif in nascent polypeptide chains, the first step in protein N-glycosylation. N-glycosylation occurs cotranslationally and the complex associates with the Sec61 complex at the channel-forming translocon complex that mediates protein translocation across the endoplasmic reticulum (ER). All subunits are required for a maximal enzyme activity. In Bos taurus (Bovine), this protein is Dolichyl-diphosphooligosaccharide--protein glycosyltransferase subunit 2.